We begin with the raw amino-acid sequence, 96 residues long: UPF0235 protein Ent638_3359 (96 aa).

Belongs to the UPF0235 family.

The polypeptide is UPF0235 protein Ent638_3359 (Enterobacter sp. (strain 638)).